A 633-amino-acid polypeptide reads, in one-letter code: Carbon catabolite-derepressing protein kinase (633 aa).

Residues 1-16 (MSSNNNTNTAPANANS) are compositionally biased toward low complexity. Residues 1–46 (MSSNNNTNTAPANANSSHHHHHHHHHHHHHGHGGSNSTLNNPKSSL) are disordered. Over residues 17-32 (SHHHHHHHHHHHHHGH) the composition is skewed to basic residues. One can recognise a Protein kinase domain in the interval 55-306 (YQIVKTLGEG…IHEIMQDDWF (252 aa)). ATP contacts are provided by residues 61–69 (LGEGSFGKV) and lysine 84. The active-site Proton acceptor is aspartate 177. Position 210 is a phosphothreonine; by autocatalysis (threonine 210). Positions 313-392 (YLLPPDLKPH…YMLIKENKSL (80 aa)) are auto-inhibitory domain (AID). The interval 317–345 (PDLKPHPEEENENNDSKKDGSSPDNDEID) is disordered. The segment covering 319–337 (LKPHPEEENENNDSKKDGS) has biased composition (basic and acidic residues). The UBA domain maps to 348-389 (LVNILSSTMGYEKDEIYESLESSEDTPAFNEIRDAYMLIKEN). Residues 409-434 (FLSQSPPTFQQQSKSHQKSQVDHETA) form a disordered region. A Phosphoserine modification is found at serine 413. A Glycyl lysine isopeptide (Lys-Gly) (interchain with G-Cter in ubiquitin) cross-link involves residue lysine 461. Serine 487 bears the Phosphoserine mark. Lysine 549 is covalently cross-linked (Glycyl lysine isopeptide (Lys-Gly) (interchain with G-Cter in SUMO)). Serine 632 is modified (phosphoserine).

The protein belongs to the protein kinase superfamily. CAMK Ser/Thr protein kinase family. SNF1 subfamily. As to quaternary structure, component of the AMP-activated protein kinase complex also known as the SNF1 kinase complex (Snf1c), a heterotrimeric complex composed of an alpha subunit (SNF1), a regulatory subunit beta (GAL83 and substoichiometric alternate beta subunits SIP1 and SIP2), and a regulatory subunit gamma (SNF4). Interacts with the transcriptional activator SIP4. Interacts with SAK1. Interacts with CTK1: Interacts with adenylate cyclase CYR1. Phosphorylation at Thr-210 in response to glucose limitation leads to activation of kinase activity. ADP, but not AMP, protects the enzyme from dephosphorylation at Thr-210 by GLC7. Post-translationally, sumoylation by the SUMO (E3) ligase MMS21 leads to inhibition by interaction of SUMO attached to Lys-549 with a SUMO-interacting sequence motif located near the active site of SNF1, and by targeting SNF1 for glucose-induced destruction via the SLX5-SLX8 (SUMO-directed) ubiquitin ligase.

It is found in the cytoplasm. It localises to the nucleus. The protein localises to the nucleus membrane. The catalysed reaction is L-seryl-[protein] + ATP = O-phospho-L-seryl-[protein] + ADP + H(+). It catalyses the reaction L-threonyl-[protein] + ATP = O-phospho-L-threonyl-[protein] + ADP + H(+). With respect to regulation, the kinase activity is positively regulated by SNF4 via sequestration of the SNF1 auto-inhibitory domain (AID). In terms of biological role, serine/threonine protein kinase essential for release from glucose repression. Catalytic subunit of the AMP-activated protein kinase complex also known as the SNF1 kinase complex (Snf1c), a central regulator of cellular energy homeostasis, which, in response to a fall in intracellular ATP levels, activates energy-producing pathways and inhibits energy-consuming processes. The complex phosphorylates histone H3 to form H3S10ph, which promotes H3K14ac formation, leading to transcriptional activation through TBP recruitment to the promoters. The complex also negatively regulates the HOG1 MAPK pathway in ER stress response including unfolded protein response (UPR). Under nutrient/energy depletion, the complex phosphorylates and activates PAS kinase PSK1 which in turn activates PBS1, leading to the inhibition of the TORC1 signaling pathway. SNF1 also interacts and phosphorylates adenylate cyclase CYR1 and negatively regulates the protein kinase A signaling pathway. Also phosphorylates and regulates the transcriptional activator CAT8. The polypeptide is Carbon catabolite-derepressing protein kinase (Saccharomyces cerevisiae (strain ATCC 204508 / S288c) (Baker's yeast)).